Consider the following 270-residue polypeptide: MNFGKKVWLIGNSSEKSKKTLNKLSKILKAEHFVFDDINPEIVISVGGDGTLLRAMHMYEYQLDRVRFLGVHTGHLGFYTDFTDEDLFEVVEALYDENPAQAIHYPLIRVQVSFTDGYQIVRHVLNEATIRRASKTMVGDVRISDYLFERFRGDGLSISTPTGSTAYNKSIGGAVVHPRVKAMQVAEIASLNNVVYRTLGSPMIVAEKDTITVCPAPEDDYSLTFDQLTFEYKNIKSIEFSLDGTTISFANCAHTPFWERVSKSFIGEVE.

The Proton acceptor role is filled by Asp49. NAD(+) contacts are provided by residues 49–50 (DG), Arg54, 126–127 (NE), Arg152, Asp154, 165–170 (TAYNKS), Ala189, and Gln227.

The protein belongs to the NAD kinase family. A divalent metal cation serves as cofactor.

It is found in the cytoplasm. The catalysed reaction is NAD(+) + ATP = ADP + NADP(+) + H(+). Functionally, involved in the regulation of the intracellular balance of NAD and NADP, and is a key enzyme in the biosynthesis of NADP. Catalyzes specifically the phosphorylation on 2'-hydroxyl of the adenosine moiety of NAD to yield NADP. The chain is NAD kinase from Lactococcus lactis subsp. lactis (strain IL1403) (Streptococcus lactis).